The chain runs to 217 residues: Adenylate kinase (217 aa).

10 to 15 (GAGKGT) provides a ligand contact to ATP. The NMP stretch occupies residues 30–59 (STGDMLREAVAKGTELGKKAKEYMDKGELV). AMP contacts are provided by residues threonine 31, arginine 36, 57–59 (ELV), 85–88 (GFPR), and glutamine 92. The interval 126 to 163 (YRRTCRNCGAVYHLIYAPPKEDNKCDKCGGELYQRDDD) is LID. Position 127 (arginine 127) interacts with ATP. Zn(2+)-binding residues include cysteine 130 and cysteine 133. 136-137 (VY) is a binding site for ATP. Zn(2+)-binding residues include cysteine 150 and cysteine 153. Arginine 160 and arginine 171 together coordinate AMP. Lysine 199 contacts ATP.

The protein belongs to the adenylate kinase family. As to quaternary structure, monomer.

The protein resides in the cytoplasm. It carries out the reaction AMP + ATP = 2 ADP. It participates in purine metabolism; AMP biosynthesis via salvage pathway; AMP from ADP: step 1/1. Functionally, catalyzes the reversible transfer of the terminal phosphate group between ATP and AMP. Plays an important role in cellular energy homeostasis and in adenine nucleotide metabolism. The protein is Adenylate kinase of Archaeoglobus fulgidus (strain ATCC 49558 / DSM 4304 / JCM 9628 / NBRC 100126 / VC-16).